A 76-amino-acid chain; its full sequence is Small ribosomal subunit protein bS16 (76 aa).

Belongs to the bacterial ribosomal protein bS16 family.

The sequence is that of Small ribosomal subunit protein bS16 from Helicobacter pylori (strain P12).